The primary structure comprises 616 residues: Dihydroxy-acid dehydratase (616 aa).

Asp81 serves as a coordination point for Mg(2+). Position 122 (Cys122) interacts with [2Fe-2S] cluster. Residues Asp123 and Lys124 each contribute to the Mg(2+) site. Lys124 is subject to N6-carboxylysine. Residue Cys197 coordinates [2Fe-2S] cluster. Glu493 is a binding site for Mg(2+). The Proton acceptor role is filled by Ser519.

The protein belongs to the IlvD/Edd family. In terms of assembly, homodimer. Requires [2Fe-2S] cluster as cofactor. It depends on Mg(2+) as a cofactor.

It catalyses the reaction (2R)-2,3-dihydroxy-3-methylbutanoate = 3-methyl-2-oxobutanoate + H2O. The catalysed reaction is (2R,3R)-2,3-dihydroxy-3-methylpentanoate = (S)-3-methyl-2-oxopentanoate + H2O. It functions in the pathway amino-acid biosynthesis; L-isoleucine biosynthesis; L-isoleucine from 2-oxobutanoate: step 3/4. Its pathway is amino-acid biosynthesis; L-valine biosynthesis; L-valine from pyruvate: step 3/4. In terms of biological role, functions in the biosynthesis of branched-chain amino acids. Catalyzes the dehydration of (2R,3R)-2,3-dihydroxy-3-methylpentanoate (2,3-dihydroxy-3-methylvalerate) into 2-oxo-3-methylpentanoate (2-oxo-3-methylvalerate) and of (2R)-2,3-dihydroxy-3-methylbutanoate (2,3-dihydroxyisovalerate) into 2-oxo-3-methylbutanoate (2-oxoisovalerate), the penultimate precursor to L-isoleucine and L-valine, respectively. The protein is Dihydroxy-acid dehydratase of Corynebacterium kroppenstedtii (strain DSM 44385 / JCM 11950 / CIP 105744 / CCUG 35717).